Here is a 124-residue protein sequence, read N- to C-terminus: MLKQKALVDVLGQVNTSGVDGSWLFNKEGLLLAYVGSEQKAVASNVSSALIASVWAALERRANDLKETILVLENGVIGCTLVARTMLLAVKADKSADLGMVRAKLHTLAAYLEQPILSISHDLG.

The protein belongs to the GAMAD family. Part of the Ragulator complex.

Its function is as follows. Regulator of the TOR pathway, a signaling cascade that promotes cell growth in response to growth factors, energy levels, and amino acids. May activate the TOR signaling cascade in response to amino acids. The polypeptide is Ragulator complex protein LAMTOR2 homolog (Caenorhabditis elegans).